We begin with the raw amino-acid sequence, 86 residues long: Small ribosomal subunit protein bS20 (86 aa).

Positions Met1–Lys25 are disordered.

It belongs to the bacterial ribosomal protein bS20 family.

In terms of biological role, binds directly to 16S ribosomal RNA. The polypeptide is Small ribosomal subunit protein bS20 (Saccharopolyspora erythraea (strain ATCC 11635 / DSM 40517 / JCM 4748 / NBRC 13426 / NCIMB 8594 / NRRL 2338)).